We begin with the raw amino-acid sequence, 261 residues long: Ribonuclease PH (261 aa).

Phosphate contacts are provided by residues Arg87 and 125–127 (GTR).

The protein belongs to the RNase PH family. Homohexameric ring arranged as a trimer of dimers.

The enzyme catalyses tRNA(n+1) + phosphate = tRNA(n) + a ribonucleoside 5'-diphosphate. Its function is as follows. Phosphorolytic 3'-5' exoribonuclease that plays an important role in tRNA 3'-end maturation. Removes nucleotide residues following the 3'-CCA terminus of tRNAs; can also add nucleotides to the ends of RNA molecules by using nucleoside diphosphates as substrates, but this may not be physiologically important. Probably plays a role in initiation of 16S rRNA degradation (leading to ribosome degradation) during starvation. This chain is Ribonuclease PH, found in Caldanaerobacter subterraneus subsp. tengcongensis (strain DSM 15242 / JCM 11007 / NBRC 100824 / MB4) (Thermoanaerobacter tengcongensis).